A 645-amino-acid chain; its full sequence is UvrABC system protein B (645 aa).

In terms of domain architecture, Helicase ATP-binding spans 24-414 (AGLNDNKRDQ…LFVEQVIRPT (391 aa)). ATP is bound at residue 37–44 (GVTGSGKT). A Beta-hairpin motif is present at residues 90 to 113 (YYDYYQPEAYLPQTDTYIEKDSVI). A Helicase C-terminal domain is found at 426-591 (AEAQVYDVVH…VLPKTIIKPI (166 aa)). One can recognise a UVR domain in the interval 610 to 645 (KDTVSSLRKQMLAHAKNLEFEEAAKIKNIIGRINNL).

The protein belongs to the UvrB family. As to quaternary structure, forms a heterotetramer with UvrA during the search for lesions. Interacts with UvrC in an incision complex.

The protein localises to the cytoplasm. Functionally, the UvrABC repair system catalyzes the recognition and processing of DNA lesions. A damage recognition complex composed of 2 UvrA and 2 UvrB subunits scans DNA for abnormalities. Upon binding of the UvrA(2)B(2) complex to a putative damaged site, the DNA wraps around one UvrB monomer. DNA wrap is dependent on ATP binding by UvrB and probably causes local melting of the DNA helix, facilitating insertion of UvrB beta-hairpin between the DNA strands. Then UvrB probes one DNA strand for the presence of a lesion. If a lesion is found the UvrA subunits dissociate and the UvrB-DNA preincision complex is formed. This complex is subsequently bound by UvrC and the second UvrB is released. If no lesion is found, the DNA wraps around the other UvrB subunit that will check the other stand for damage. The sequence is that of UvrABC system protein B from Wolbachia sp. subsp. Brugia malayi (strain TRS).